Here is a 461-residue protein sequence, read N- to C-terminus: Ribosomal protein uS12 methylthiotransferase RimO (461 aa).

In terms of domain architecture, MTTase N-terminal spans 13 to 128 (PKVGFVSLGC…VMQHVHTHLP (116 aa)). 6 residues coordinate [4Fe-4S] cluster: Cys-22, Cys-58, Cys-87, Cys-159, Cys-163, and Cys-166. In terms of domain architecture, Radical SAM core spans 145–390 (LTPRHYAYLK…MEVAEEVSAK (246 aa)). Residues 393 to 461 (AKKVGKTLKV…ADGHDLWGEV (69 aa)) enclose the TRAM domain.

It belongs to the methylthiotransferase family. RimO subfamily. The cofactor is [4Fe-4S] cluster.

Its subcellular location is the cytoplasm. The catalysed reaction is L-aspartate(89)-[ribosomal protein uS12]-hydrogen + (sulfur carrier)-SH + AH2 + 2 S-adenosyl-L-methionine = 3-methylsulfanyl-L-aspartate(89)-[ribosomal protein uS12]-hydrogen + (sulfur carrier)-H + 5'-deoxyadenosine + L-methionine + A + S-adenosyl-L-homocysteine + 2 H(+). Catalyzes the methylthiolation of an aspartic acid residue of ribosomal protein uS12. This is Ribosomal protein uS12 methylthiotransferase RimO from Paraburkholderia phytofirmans (strain DSM 17436 / LMG 22146 / PsJN) (Burkholderia phytofirmans).